We begin with the raw amino-acid sequence, 1415 residues long: DNA-directed RNA polymerase subunit beta' (1415 aa).

C71, C73, C86, and C89 together coordinate Zn(2+). The Mg(2+) site is built by D461, D463, and D465. Residues C815, C889, C896, and C899 each coordinate Zn(2+).

Belongs to the RNA polymerase beta' chain family. In terms of assembly, the RNAP catalytic core consists of 2 alpha, 1 beta, 1 beta' and 1 omega subunit. When a sigma factor is associated with the core the holoenzyme is formed, which can initiate transcription. It depends on Mg(2+) as a cofactor. Zn(2+) is required as a cofactor.

The catalysed reaction is RNA(n) + a ribonucleoside 5'-triphosphate = RNA(n+1) + diphosphate. In terms of biological role, DNA-dependent RNA polymerase catalyzes the transcription of DNA into RNA using the four ribonucleoside triphosphates as substrates. The protein is DNA-directed RNA polymerase subunit beta' of Haemophilus influenzae (strain ATCC 51907 / DSM 11121 / KW20 / Rd).